The following is a 50-amino-acid chain: HLLQFGDLIDKIAGRSGFWYYGFYGCYCGLGGRGRPQDATDRCCFVHDCC.

Ca(2+) is bound by residues Tyr27, Gly29, and Gly31. Cys28 and Cys44 are oxidised to a cystine. His47 is a catalytic residue. Asp48 is a Ca(2+) binding site.

This sequence belongs to the phospholipase A2 family. Group II subfamily. D49 sub-subfamily. As to quaternary structure, monomer. Ca(2+) is required as a cofactor. As to expression, expressed by the venom gland.

Its subcellular location is the secreted. The catalysed reaction is a 1,2-diacyl-sn-glycero-3-phosphocholine + H2O = a 1-acyl-sn-glycero-3-phosphocholine + a fatty acid + H(+). Its function is as follows. Snake venom phospholipase A2 (PLA2) that displays a potent enzymatic activity as measured by indirect hemolysis of red blood cells. Is neither lethal when injected into mice nor does it present anticoagulant activity. Displays a moderate inhibitory activity on the aggregation of platelets induced by low levels of ADP, thrombin and arachidonate. In contrast, strongly inhibits platelet aggregation induced by high doses of collagen. Shows myotoxic activity, increases the plasma creatine-kinase activity and induces edema and myonecrosis of mouse skeletal muscles. PLA2 catalyzes the calcium-dependent hydrolysis of the 2-acyl groups in 3-sn-phosphoglycerides. This chain is Acidic phospholipase A2 1, found in Lachesis muta muta (Bushmaster).